Reading from the N-terminus, the 418-residue chain is UDP-N-acetylglucosamine 1-carboxyvinyltransferase (418 aa).

Position 22 to 23 (22 to 23) interacts with phosphoenolpyruvate; the sequence is KN. Arg91 provides a ligand contact to UDP-N-acetyl-alpha-D-glucosamine. The active-site Proton donor is the Cys115. Position 115 is a 2-(S-cysteinyl)pyruvic acid O-phosphothioketal (Cys115). UDP-N-acetyl-alpha-D-glucosamine is bound by residues Asp305 and Ile327.

This sequence belongs to the EPSP synthase family. MurA subfamily.

Its subcellular location is the cytoplasm. It catalyses the reaction phosphoenolpyruvate + UDP-N-acetyl-alpha-D-glucosamine = UDP-N-acetyl-3-O-(1-carboxyvinyl)-alpha-D-glucosamine + phosphate. The protein operates within cell wall biogenesis; peptidoglycan biosynthesis. Cell wall formation. Adds enolpyruvyl to UDP-N-acetylglucosamine. The sequence is that of UDP-N-acetylglucosamine 1-carboxyvinyltransferase from Aeromonas hydrophila subsp. hydrophila (strain ATCC 7966 / DSM 30187 / BCRC 13018 / CCUG 14551 / JCM 1027 / KCTC 2358 / NCIMB 9240 / NCTC 8049).